The chain runs to 54 residues: Large ribosomal subunit protein bL32c (54 aa).

Belongs to the bacterial ribosomal protein bL32 family.

The protein localises to the plastid. It localises to the chloroplast. This is Large ribosomal subunit protein bL32c from Panax ginseng (Korean ginseng).